A 349-amino-acid chain; its full sequence is Small ribosomal subunit protein uS2 (349 aa).

Belongs to the universal ribosomal protein uS2 family.

This Methylobacterium sp. (strain 4-46) protein is Small ribosomal subunit protein uS2.